Consider the following 139-residue polypeptide: Acidic phospholipase A2 H1E6 (139 aa).

Residues 1–16 (MRTLWILAVLQVGVEG) form the signal peptide. Intrachain disulfides connect Cys-42–Cys-132, Cys-44–Cys-60, Cys-59–Cys-111, Cys-65–Cys-139, Cys-66–Cys-104, Cys-73–Cys-97, and Cys-91–Cys-102. 3 residues coordinate Ca(2+): Tyr-43, Gly-45, and Gly-47. His-63 is a catalytic residue. Asp-64 contacts Ca(2+). Residue Asp-105 is part of the active site.

In terms of assembly, homodimer. It depends on Ca(2+) as a cofactor. Expressed by the venom gland.

It is found in the secreted. It carries out the reaction a 1,2-diacyl-sn-glycero-3-phosphocholine + H2O = a 1-acyl-sn-glycero-3-phosphocholine + a fatty acid + H(+). Functionally, snake venom phospholipase A2 (PLA2) that inhibits ADP-induced platelet aggregation. PLA2 catalyzes the calcium-dependent hydrolysis of the 2-acyl groups in 3-sn-phosphoglycerides. The polypeptide is Acidic phospholipase A2 H1E6 (Calloselasma rhodostoma (Malayan pit viper)).